The primary structure comprises 1174 residues: Carboxylic acid reductase (1174 aa).

Residues His297, Ser392, 413–414 (EG), Thr418, Asp491, 503–506 (YLDR), Lys512, and Lys612 each bind AMP. The Carrier domain maps to 651–726 (APVLVTVCRA…ALADYVEAAR (76 aa)). At Ser685 the chain carries O-(pantetheine 4'-phosphoryl)serine. Residues 787 to 791 (TGFLG), Arg814, Arg824, 854 to 855 (DK), 880 to 882 (PAA), 919 to 920 (TS), Tyr956, and Lys960 contribute to the NADP(+) site.

This sequence belongs to the ATP-dependent AMP-binding enzyme family. Carboxylic acid reductase subfamily. It depends on pantetheine 4'-phosphate as a cofactor.

It catalyses the reaction a carboxylate + ATP + NADPH + H(+) = an aldehyde + AMP + diphosphate + NADP(+). Catalyzes the ATP- and NADPH-dependent reduction of carboxylic acids to the corresponding aldehydes. Catalyzes the reduction of a wide range of aliphatic fatty acids (C6-C18) into their corresponding aldehydes. Can also reduce benzoate to benzaldehyde. Has a preference for NADPH over NADH as the electron donor. The sequence is that of Carboxylic acid reductase from Mycobacterium marinum (strain ATCC BAA-535 / M).